The chain runs to 193 residues: Acyl carrier protein phosphodiesterase (193 aa).

The protein belongs to the AcpH family.

The catalysed reaction is holo-[ACP] + H2O = apo-[ACP] + (R)-4'-phosphopantetheine + H(+). Its function is as follows. Converts holo-ACP to apo-ACP by hydrolytic cleavage of the phosphopantetheine prosthetic group from ACP. The chain is Acyl carrier protein phosphodiesterase from Serratia proteamaculans (strain 568).